Here is a 217-residue protein sequence, read N- to C-terminus: Large ribosomal subunit protein uL4 (217 aa).

The segment at 46-103 (KRQGTHATKTRGMVSGGGRKPFRQKGTGRARQGSIRAPHFTGGGTVHGPQPRDYSQRT) is disordered.

The protein belongs to the universal ribosomal protein uL4 family. As to quaternary structure, part of the 50S ribosomal subunit.

Functionally, one of the primary rRNA binding proteins, this protein initially binds near the 5'-end of the 23S rRNA. It is important during the early stages of 50S assembly. It makes multiple contacts with different domains of the 23S rRNA in the assembled 50S subunit and ribosome. Its function is as follows. Forms part of the polypeptide exit tunnel. The polypeptide is Large ribosomal subunit protein uL4 (Corynebacterium jeikeium (strain K411)).